The chain runs to 43 residues: Protein PsbN (43 aa).

Residues T5–F27 form a helical membrane-spanning segment.

Belongs to the PsbN family.

It is found in the plastid. It localises to the chloroplast thylakoid membrane. In terms of biological role, may play a role in photosystem I and II biogenesis. This Welwitschia mirabilis (Tree tumbo) protein is Protein PsbN.